A 494-amino-acid chain; its full sequence is Cytochrome P450 2B11 (494 aa).

Phosphoserine; by PKA is present on serine 128. Cysteine 436 lines the heme pocket.

It belongs to the cytochrome P450 family. Heme is required as a cofactor.

Its subcellular location is the endoplasmic reticulum membrane. The protein localises to the microsome membrane. The enzyme catalyses an organic molecule + reduced [NADPH--hemoprotein reductase] + O2 = an alcohol + oxidized [NADPH--hemoprotein reductase] + H2O + H(+). Cytochromes P450 are a group of heme-thiolate monooxygenases. In liver microsomes, this enzyme is involved in an NADPH-dependent electron transport pathway. This isozyme seems responsible for metabolism of 2,2',4,4',5,5'-hexachlorobiphenyl. The chain is Cytochrome P450 2B11 (CYP2B11) from Canis lupus familiaris (Dog).